The chain runs to 507 residues: ATP synthase subunit alpha, chloroplastic (507 aa).

170-177 serves as a coordination point for ATP; it reads GDRQTGKT.

It belongs to the ATPase alpha/beta chains family. As to quaternary structure, F-type ATPases have 2 components, CF(1) - the catalytic core - and CF(0) - the membrane proton channel. CF(1) has five subunits: alpha(3), beta(3), gamma(1), delta(1), epsilon(1). CF(0) has four main subunits: a, b, b' and c.

It localises to the plastid. It is found in the chloroplast thylakoid membrane. It carries out the reaction ATP + H2O + 4 H(+)(in) = ADP + phosphate + 5 H(+)(out). Produces ATP from ADP in the presence of a proton gradient across the membrane. The alpha chain is a regulatory subunit. In Nicotiana tomentosiformis (Tobacco), this protein is ATP synthase subunit alpha, chloroplastic.